The chain runs to 101 residues: Chaperone modulatory protein CbpM (101 aa).

It belongs to the CbpM family.

Interacts with CbpA and inhibits both the DnaJ-like co-chaperone activity and the DNA binding activity of CbpA. Together with CbpA, modulates the activity of the DnaK chaperone system. Does not inhibit the co-chaperone activity of DnaJ. In Pseudomonas entomophila (strain L48), this protein is Chaperone modulatory protein CbpM.